The primary structure comprises 341 residues: S-adenosylmethionine:tRNA ribosyltransferase-isomerase (341 aa).

The protein belongs to the QueA family. As to quaternary structure, monomer.

Its subcellular location is the cytoplasm. It catalyses the reaction 7-aminomethyl-7-carbaguanosine(34) in tRNA + S-adenosyl-L-methionine = epoxyqueuosine(34) in tRNA + adenine + L-methionine + 2 H(+). It functions in the pathway tRNA modification; tRNA-queuosine biosynthesis. In terms of biological role, transfers and isomerizes the ribose moiety from AdoMet to the 7-aminomethyl group of 7-deazaguanine (preQ1-tRNA) to give epoxyqueuosine (oQ-tRNA). This chain is S-adenosylmethionine:tRNA ribosyltransferase-isomerase, found in Caldanaerobacter subterraneus subsp. tengcongensis (strain DSM 15242 / JCM 11007 / NBRC 100824 / MB4) (Thermoanaerobacter tengcongensis).